Reading from the N-terminus, the 566-residue chain is Phenylalanine--tRNA ligase beta subunit (566 aa).

Residues 287–362 (YFQEEVEFDV…IGEGLASFYP (76 aa)) form the B5 domain. Mg(2+) is bound by residues Asp340, Asp346, Glu349, and Asp350.

This sequence belongs to the phenylalanyl-tRNA synthetase beta subunit family. Type 2 subfamily. In terms of assembly, tetramer of two alpha and two beta subunits. It depends on Mg(2+) as a cofactor.

The protein resides in the cytoplasm. It catalyses the reaction tRNA(Phe) + L-phenylalanine + ATP = L-phenylalanyl-tRNA(Phe) + AMP + diphosphate + H(+). The chain is Phenylalanine--tRNA ligase beta subunit from Borrelia garinii subsp. bavariensis (strain ATCC BAA-2496 / DSM 23469 / PBi) (Borreliella bavariensis).